The chain runs to 284 residues: 4-diphosphocytidyl-2-C-methyl-D-erythritol kinase (284 aa).

Residue Lys14 is part of the active site. ATP is bound at residue 98-108; it reads PMGGGLGGGSS. Asp140 is an active-site residue.

The protein belongs to the GHMP kinase family. IspE subfamily.

It carries out the reaction 4-CDP-2-C-methyl-D-erythritol + ATP = 4-CDP-2-C-methyl-D-erythritol 2-phosphate + ADP + H(+). The protein operates within isoprenoid biosynthesis; isopentenyl diphosphate biosynthesis via DXP pathway; isopentenyl diphosphate from 1-deoxy-D-xylulose 5-phosphate: step 3/6. In terms of biological role, catalyzes the phosphorylation of the position 2 hydroxy group of 4-diphosphocytidyl-2C-methyl-D-erythritol. The polypeptide is 4-diphosphocytidyl-2-C-methyl-D-erythritol kinase (Shewanella baltica (strain OS155 / ATCC BAA-1091)).